Consider the following 79-residue polypeptide: Small ribosomal subunit protein bS21 (79 aa).

The tract at residues 59–79 (RKKMQREGLLPMKPKPVVGVR) is disordered.

Belongs to the bacterial ribosomal protein bS21 family.

The sequence is that of Small ribosomal subunit protein bS21 from Methylocella silvestris (strain DSM 15510 / CIP 108128 / LMG 27833 / NCIMB 13906 / BL2).